Consider the following 183-residue polypeptide: ATP synthase subunit delta (183 aa).

Belongs to the ATPase delta chain family. As to quaternary structure, F-type ATPases have 2 components, F(1) - the catalytic core - and F(0) - the membrane proton channel. F(1) has five subunits: alpha(3), beta(3), gamma(1), delta(1), epsilon(1). F(0) has three main subunits: a(1), b(2) and c(10-14). The alpha and beta chains form an alternating ring which encloses part of the gamma chain. F(1) is attached to F(0) by a central stalk formed by the gamma and epsilon chains, while a peripheral stalk is formed by the delta and b chains.

It localises to the cell inner membrane. In terms of biological role, f(1)F(0) ATP synthase produces ATP from ADP in the presence of a proton or sodium gradient. F-type ATPases consist of two structural domains, F(1) containing the extramembraneous catalytic core and F(0) containing the membrane proton channel, linked together by a central stalk and a peripheral stalk. During catalysis, ATP synthesis in the catalytic domain of F(1) is coupled via a rotary mechanism of the central stalk subunits to proton translocation. This protein is part of the stalk that links CF(0) to CF(1). It either transmits conformational changes from CF(0) to CF(1) or is implicated in proton conduction. The sequence is that of ATP synthase subunit delta from Ruthia magnifica subsp. Calyptogena magnifica.